The primary structure comprises 413 residues: Serine hydroxymethyltransferase (413 aa).

(6S)-5,6,7,8-tetrahydrofolate-binding positions include Leu118 and 122 to 124 (GHL). Position 228 is an N6-(pyridoxal phosphate)lysine (Lys228).

The protein belongs to the SHMT family. As to quaternary structure, homodimer. Requires pyridoxal 5'-phosphate as cofactor.

The protein localises to the cytoplasm. It catalyses the reaction (6R)-5,10-methylene-5,6,7,8-tetrahydrofolate + glycine + H2O = (6S)-5,6,7,8-tetrahydrofolate + L-serine. It participates in one-carbon metabolism; tetrahydrofolate interconversion. The protein operates within amino-acid biosynthesis; glycine biosynthesis; glycine from L-serine: step 1/1. Its function is as follows. Catalyzes the reversible interconversion of serine and glycine with tetrahydrofolate (THF) serving as the one-carbon carrier. This reaction serves as the major source of one-carbon groups required for the biosynthesis of purines, thymidylate, methionine, and other important biomolecules. Also exhibits THF-independent aldolase activity toward beta-hydroxyamino acids, producing glycine and aldehydes, via a retro-aldol mechanism. The sequence is that of Serine hydroxymethyltransferase from Phytoplasma australiense.